A 121-amino-acid chain; its full sequence is ATP synthase epsilon chain (121 aa).

The protein belongs to the ATPase epsilon chain family. As to quaternary structure, F-type ATPases have 2 components, CF(1) - the catalytic core - and CF(0) - the membrane proton channel. CF(1) has five subunits: alpha(3), beta(3), gamma(1), delta(1), epsilon(1). CF(0) has three main subunits: a, b and c.

It localises to the cell membrane. Its function is as follows. Produces ATP from ADP in the presence of a proton gradient across the membrane. This chain is ATP synthase epsilon chain, found in Mycobacterium leprae (strain Br4923).